Reading from the N-terminus, the 491-residue chain is MSNILRRGRLEAAQDEEILRYTSSMEADRWIFDADIAVDLAHTVMLKEQGIINREDCSKILSGLLKIREEGMEKLDFSYEDIHISLESRLIDMVGEDVGGRMHSGRSRNDEVATCIRLVLREELTGLLEEIHELRQALLTLAEKHTETLMPGFTHMQHAQPTTLAHHLCAHEAALGRDFDRIQDAYSRVNLCPLGAAAFASTGFNLNRKRTQELLGFDGLLENSMDAVSTRDFLIECASGFTNLMINLSRMAEELVIWSSSEFNFIELDDMYASTSSIMPQKKNPDTAELMRGKTGVAVGALMSLITICKGLPLSYNRDLQEATPNLWRSVETVRASVRIMEGMIKTMKVRPEVLVAQSVTGFTTATELADTFVRETGIPFRTAHQIVGMLAREMEKPTLKKIDSVAEIVLGESLSSRGLKEKMVKEALNPFSNVEIRKIAGGPAPEEMRNYLSKRQTELELNRQEIATLKDITDSAFENLLATVNEYRQA.

It belongs to the lyase 1 family. Argininosuccinate lyase subfamily.

Its subcellular location is the cytoplasm. The catalysed reaction is 2-(N(omega)-L-arginino)succinate = fumarate + L-arginine. Its pathway is amino-acid biosynthesis; L-arginine biosynthesis; L-arginine from L-ornithine and carbamoyl phosphate: step 3/3. The protein is Argininosuccinate lyase of Methanosarcina barkeri (strain Fusaro / DSM 804).